A 307-amino-acid polypeptide reads, in one-letter code: Aspartate carbamoyltransferase catalytic subunit (307 aa).

The carbamoyl phosphate site is built by Arg56 and Thr57. Lys84 contributes to the L-aspartate binding site. Arg106, His136, and Gln139 together coordinate carbamoyl phosphate. Arg169 and Arg221 together coordinate L-aspartate. Carbamoyl phosphate is bound by residues Ala262 and Pro263.

This sequence belongs to the aspartate/ornithine carbamoyltransferase superfamily. ATCase family. As to quaternary structure, heterododecamer (2C3:3R2) of six catalytic PyrB chains organized as two trimers (C3), and six regulatory PyrI chains organized as three dimers (R2).

The enzyme catalyses carbamoyl phosphate + L-aspartate = N-carbamoyl-L-aspartate + phosphate + H(+). It functions in the pathway pyrimidine metabolism; UMP biosynthesis via de novo pathway; (S)-dihydroorotate from bicarbonate: step 2/3. Catalyzes the condensation of carbamoyl phosphate and aspartate to form carbamoyl aspartate and inorganic phosphate, the committed step in the de novo pyrimidine nucleotide biosynthesis pathway. The protein is Aspartate carbamoyltransferase catalytic subunit of Streptococcus pneumoniae (strain JJA).